A 288-amino-acid chain; its full sequence is Light-independent protochlorophyllide reductase iron-sulfur ATP-binding protein (288 aa).

ATP-binding positions include 10–15 and K39; that span reads GIGKST. S14 provides a ligand contact to Mg(2+). The [4Fe-4S] cluster site is built by C95 and C129. Residue 180-181 coordinates ATP; the sequence is NR.

This sequence belongs to the NifH/BchL/ChlL family. Homodimer. Protochlorophyllide reductase is composed of three subunits; ChlL, ChlN and ChlB. It depends on [4Fe-4S] cluster as a cofactor.

The catalysed reaction is chlorophyllide a + oxidized 2[4Fe-4S]-[ferredoxin] + 2 ADP + 2 phosphate = protochlorophyllide a + reduced 2[4Fe-4S]-[ferredoxin] + 2 ATP + 2 H2O. It functions in the pathway porphyrin-containing compound metabolism; chlorophyll biosynthesis (light-independent). In terms of biological role, component of the dark-operative protochlorophyllide reductase (DPOR) that uses Mg-ATP and reduced ferredoxin to reduce ring D of protochlorophyllide (Pchlide) to form chlorophyllide a (Chlide). This reaction is light-independent. The L component serves as a unique electron donor to the NB-component of the complex, and binds Mg-ATP. The protein is Light-independent protochlorophyllide reductase iron-sulfur ATP-binding protein of Nostoc sp. (strain PCC 7120 / SAG 25.82 / UTEX 2576).